A 360-amino-acid polypeptide reads, in one-letter code: Isopentenyl-diphosphate delta-isomerase (360 aa).

6 to 7 (RK) serves as a coordination point for substrate. FMN is bound by residues T62, 63–65 (GMT), S93, and N122. 93 to 95 (SQR) is a substrate binding site. Q157 is a binding site for substrate. E158 is a Mg(2+) binding site. Residues K189, S214, T219, 272 to 274 (GIR), and 293 to 294 (AL) contribute to the FMN site.

This sequence belongs to the IPP isomerase type 2 family. Homooctamer. Dimer of tetramers. FMN serves as cofactor. NADPH is required as a cofactor. Requires Mg(2+) as cofactor.

The protein resides in the cytoplasm. It catalyses the reaction isopentenyl diphosphate = dimethylallyl diphosphate. Functionally, involved in the biosynthesis of isoprenoids. Catalyzes the 1,3-allylic rearrangement of the homoallylic substrate isopentenyl (IPP) to its allylic isomer, dimethylallyl diphosphate (DMAPP). In Ignicoccus hospitalis (strain KIN4/I / DSM 18386 / JCM 14125), this protein is Isopentenyl-diphosphate delta-isomerase.